The sequence spans 166 residues: Small ribosomal subunit protein bS18m (166 aa).

A mitochondrion-targeting transit peptide spans 1 to 31; that stretch reads MLGRRIFSPAPNRGFILCNLIQSNNSTRRGF. The disordered stretch occupies residues 29–48; it reads RGFSDNRKFNERNSEASSNV. Basic and acidic residues predominate over residues 30–42; it reads GFSDNRKFNERNS.

It belongs to the bacterial ribosomal protein bS18 family. Component of the mitochondrial small ribosomal subunit (mt-SSU). Mature yeast 74S mitochondrial ribosomes consist of a small (37S) and a large (54S) subunit. The 37S small subunit contains a 15S ribosomal RNA (15S mt-rRNA) and at least 32 different proteins. The 54S large subunit contains a 21S rRNA (21S mt-rRNA) and at least 45 different proteins.

The protein localises to the mitochondrion. Component of the mitochondrial ribosome (mitoribosome), a dedicated translation machinery responsible for the synthesis of mitochondrial genome-encoded proteins, including at least some of the essential transmembrane subunits of the mitochondrial respiratory chain. The mitoribosomes are attached to the mitochondrial inner membrane and translation products are cotranslationally integrated into the membrane. The sequence is that of Small ribosomal subunit protein bS18m (rsm18) from Schizosaccharomyces pombe (strain 972 / ATCC 24843) (Fission yeast).